The sequence spans 966 residues: Catenin alpha-2 (966 aa).

The segment covering 924 to 940 (PEKKPLVKREKPEEYQT) has biased composition (basic and acidic residues). The tract at residues 924–952 (PEKKPLVKREKPEEYQTRVRRGSQKKHIS) is disordered. The span at 941 to 951 (RVRRGSQKKHI) shows a compositional bias: basic residues.

The protein belongs to the vinculin/alpha-catenin family.

The protein resides in the cell membrane. The protein localises to the cytoplasm. It localises to the cytoskeleton. It is found in the cell junction. Its subcellular location is the adherens junction. The protein resides in the cell projection. The protein localises to the axon. It localises to the nucleus. May function as a linker between cadherin adhesion receptors and the cytoskeleton to regulate cell-cell adhesion and differentiation in the nervous system. The protein is Catenin alpha-2 (ctnna2) of Xenopus tropicalis (Western clawed frog).